A 162-amino-acid polypeptide reads, in one-letter code: Cadmium metallothionein (162 aa).

Residues 1–2 constitute a propeptide that is removed on maturation; that stretch reads MD.

In terms of biological role, the metallothioneins are involved in the cellular sequestration of toxic metal ions. This Tetrahymena thermophila protein is Cadmium metallothionein (MTT1).